The primary structure comprises 565 residues: Mediator of RNA polymerase II transcription subunit 1 (565 aa).

The interval 141 to 170 (SGNNLGSGNGTNGSSLTNKTDKKSVSSGNG) is disordered.

The protein belongs to the Mediator complex subunit 1 family. Component of the Mediator complex.

It localises to the nucleus. Its function is as follows. Component of the Mediator complex, a coactivator involved in the regulated transcription of nearly all RNA polymerase II-dependent genes. Mediator functions as a bridge to convey information from gene-specific regulatory proteins to the basal RNA polymerase II transcription machinery. Mediator is recruited to promoters by direct interactions with regulatory proteins and serves as a scaffold for the assembly of a functional preinitiation complex with RNA polymerase II and the general transcription factors. This chain is Mediator of RNA polymerase II transcription subunit 1 (MED1), found in Candida glabrata (strain ATCC 2001 / BCRC 20586 / JCM 3761 / NBRC 0622 / NRRL Y-65 / CBS 138) (Yeast).